The sequence spans 439 residues: Acyl-coenzyme A thioesterase 9, mitochondrial (439 aa).

A mitochondrion-targeting transit peptide spans 1–21; it reads MKRAAIRLWTLNKGLLTHGRG. 2 consecutive HotDog ACOT-type domains span residues 85–209 and 289–401; these read SYIE…RDSE and EDTK…EKEV. K102 carries the N6-acetyllysine modification.

This sequence belongs to the acyl coenzyme A hydrolase family. In terms of assembly, interacts with NYAP1, NYAP2 and MYO16. In terms of tissue distribution, widely expressed.

It localises to the mitochondrion. Its subcellular location is the mitochondrion matrix. The protein localises to the mitochondrion inner membrane. The enzyme catalyses butanoyl-CoA + H2O = butanoate + CoA + H(+). It carries out the reaction propanoyl-CoA + H2O = propanoate + CoA + H(+). The catalysed reaction is hexadecanoyl-CoA + H2O = hexadecanoate + CoA + H(+). It catalyses the reaction octanoyl-CoA + H2O = octanoate + CoA + H(+). The enzyme catalyses decanoyl-CoA + H2O = decanoate + CoA + H(+). It carries out the reaction tetradecanoyl-CoA + H2O = tetradecanoate + CoA + H(+). The catalysed reaction is 4,8-dimethylnonanoyl-CoA + H2O = 4,8-dimethylnonanoate + CoA + H(+). It catalyses the reaction 3-methylbutanoyl-CoA + H2O = 3-methylbutanoate + CoA + H(+). The enzyme catalyses 2-methylpropanoyl-CoA + H2O = 2-methylpropanoate + CoA + H(+). It participates in lipid metabolism; fatty acid metabolism. With respect to regulation, strongly inhibited by NADH and CoA. Mitochondrial acyl-CoA thioesterase. Catalyzes the hydrolysis of acyl-CoAs into free fatty acids and coenzyme A (CoA), regulating their respective intracellular levels. Shows a clear preference for hydrophobic short-, medium-, and long-chain saturated acyl-CoAs with some activity also with short-chain dicarboxylic CoA esters. Regulates both mitochondrial lipid and amino acid metabolism. The chain is Acyl-coenzyme A thioesterase 9, mitochondrial (Acot9) from Mus musculus (Mouse).